A 322-amino-acid chain; its full sequence is ATP-dependent 6-phosphofructokinase (322 aa).

Residue glycine 11 coordinates ATP. Residue 21–25 participates in ADP binding; it reads RAVVR. Residues 72–73 and 102–105 each bind ATP; these read RC and GDGS. Aspartate 103 is a binding site for Mg(2+). A substrate-binding site is contributed by 127–129; the sequence is TID. Aspartate 129 serves as the catalytic Proton acceptor. Arginine 156 provides a ligand contact to ADP. Substrate is bound by residues arginine 164 and 171–173; that span reads MGR. ADP is bound by residues 187–189, arginine 213, and 215–217; these read GAE and KKH. Residues glutamate 224, arginine 245, and 251-254 each bind substrate; that span reads HVQR.

The protein belongs to the phosphofructokinase type A (PFKA) family. ATP-dependent PFK group I subfamily. Prokaryotic clade 'B1' sub-subfamily. As to quaternary structure, homotetramer. Requires Mg(2+) as cofactor.

It localises to the cytoplasm. The enzyme catalyses beta-D-fructose 6-phosphate + ATP = beta-D-fructose 1,6-bisphosphate + ADP + H(+). It participates in carbohydrate degradation; glycolysis; D-glyceraldehyde 3-phosphate and glycerone phosphate from D-glucose: step 3/4. With respect to regulation, allosterically activated by ADP and other diphosphonucleosides, and allosterically inhibited by phosphoenolpyruvate. Catalyzes the phosphorylation of D-fructose 6-phosphate to fructose 1,6-bisphosphate by ATP, the first committing step of glycolysis. This Staphylococcus aureus (strain MRSA252) protein is ATP-dependent 6-phosphofructokinase.